The sequence spans 576 residues: Adenine deaminase (576 aa).

It belongs to the metallo-dependent hydrolases superfamily. Adenine deaminase family. The cofactor is Mn(2+).

It catalyses the reaction adenine + H2O + H(+) = hypoxanthine + NH4(+). This chain is Adenine deaminase, found in Bacillus pumilus (strain SAFR-032).